Reading from the N-terminus, the 520-residue chain is Tetratricopeptide repeat protein 6 (520 aa).

TPR repeat units follow at residues 57–90, 101–138, 139–172, 176–209, 210–243, 245–280, 281–314, 320–347, 348–381, 382–415, 416–449, 450–483, and 484–517; these read MTMC…ISHS, ADCL…DKNS, YTAF…DATE, LNTF…SRTN, GSLC…NPCF, DAYV…NPAY, IKAR…DPKN, GRAV…ISTT, AEFL…NPKY, SLAY…DPEN, EYVL…CPFW, AAVY…KPND, and ALVY…EDYA.

This is Tetratricopeptide repeat protein 6 from Homo sapiens (Human).